Consider the following 427-residue polypeptide: 3-phosphoshikimate 1-carboxyvinyltransferase (427 aa).

Positions 22, 23, and 27 each coordinate 3-phosphoshikimate. K22 is a phosphoenolpyruvate binding site. Phosphoenolpyruvate contacts are provided by G96 and R124. S169, S170, Q171, S197, D313, N336, and K340 together coordinate 3-phosphoshikimate. Q171 serves as a coordination point for phosphoenolpyruvate. The active-site Proton acceptor is D313. Phosphoenolpyruvate contacts are provided by R344, R386, and K411.

Belongs to the EPSP synthase family. Monomer.

It localises to the cytoplasm. It catalyses the reaction 3-phosphoshikimate + phosphoenolpyruvate = 5-O-(1-carboxyvinyl)-3-phosphoshikimate + phosphate. It participates in metabolic intermediate biosynthesis; chorismate biosynthesis; chorismate from D-erythrose 4-phosphate and phosphoenolpyruvate: step 6/7. Its function is as follows. Catalyzes the transfer of the enolpyruvyl moiety of phosphoenolpyruvate (PEP) to the 5-hydroxyl of shikimate-3-phosphate (S3P) to produce enolpyruvyl shikimate-3-phosphate and inorganic phosphate. This chain is 3-phosphoshikimate 1-carboxyvinyltransferase, found in Klebsiella pneumoniae subsp. pneumoniae (strain ATCC 700721 / MGH 78578).